Reading from the N-terminus, the 255-residue chain is tRNA pseudouridine synthase A (255 aa).

The active-site Nucleophile is the Asp60. Tyr118 contributes to the substrate binding site.

Belongs to the tRNA pseudouridine synthase TruA family. Homodimer.

The enzyme catalyses uridine(38/39/40) in tRNA = pseudouridine(38/39/40) in tRNA. Functionally, formation of pseudouridine at positions 38, 39 and 40 in the anticodon stem and loop of transfer RNAs. The protein is tRNA pseudouridine synthase A of Leuconostoc mesenteroides subsp. mesenteroides (strain ATCC 8293 / DSM 20343 / BCRC 11652 / CCM 1803 / JCM 6124 / NCDO 523 / NBRC 100496 / NCIMB 8023 / NCTC 12954 / NRRL B-1118 / 37Y).